Consider the following 243-residue polypeptide: Carboxy-S-adenosyl-L-methionine synthase (243 aa).

S-adenosyl-L-methionine-binding positions include Tyr-39, 64–66 (GCS), Asn-132, and Arg-199.

This sequence belongs to the class I-like SAM-binding methyltransferase superfamily. Cx-SAM synthase family. Homodimer.

It carries out the reaction prephenate + S-adenosyl-L-methionine = carboxy-S-adenosyl-L-methionine + 3-phenylpyruvate + H2O. Its function is as follows. Catalyzes the conversion of S-adenosyl-L-methionine (SAM) to carboxy-S-adenosyl-L-methionine (Cx-SAM). The chain is Carboxy-S-adenosyl-L-methionine synthase from Alteromonas mediterranea (strain DSM 17117 / CIP 110805 / LMG 28347 / Deep ecotype).